A 334-amino-acid polypeptide reads, in one-letter code: Gap junction alpha-2 protein (334 aa).

Topologically, residues 1–12 (MAGWELLKLLLD) are cytoplasmic. The chain crosses the membrane as a helical span at residues 13 to 35 (DVQEHSTLIGKVWLTVLFIFRIF). The Extracellular segment spans residues 36–75 (ILSVAGESVWTDEQSDFICNTQQPGCTNVCYDQAFPISHV). Residues 76-98 (RYWVLQFLFVSTPTLIYLGHMVY) form a helical membrane-spanning segment. Residues 99-153 (LSKKEEKERQKENESRILVANEAQTEVHSSATKKIRIQGPLMCTYTTSVVFKSIF) lie on the Cytoplasmic side of the membrane. A helical transmembrane segment spans residues 154–176 (EAGFLLGQWYIYGFVMSPIFVCE). Residues 177–207 (RIPCKHKVECFVSRPMEKTIFIIFMLVVSLI) lie on the Extracellular side of the membrane. The helical transmembrane segment at 208-230 (SLLLNLMELIHLSFKCFQHGIKE) threads the bilayer. At 231–334 (GATCSPTGIP…HQTSSKQQYV (104 aa)) the chain is on the cytoplasmic side.

This sequence belongs to the connexin family. Alpha-type (group II) subfamily. In terms of assembly, a connexon is composed of a hexamer of connexins. As to expression, resides primarily in the ovary, oocytes and early embryos.

The protein resides in the cell membrane. Its subcellular location is the cell junction. The protein localises to the gap junction. Functionally, one gap junction consists of a cluster of closely packed pairs of transmembrane channels, the connexons, through which materials of low MW diffuse from one cell to a neighboring cell. The polypeptide is Gap junction alpha-2 protein (gja2) (Xenopus laevis (African clawed frog)).